Reading from the N-terminus, the 435-residue chain is Amino acid transporter AVT6C (435 aa).

Residues 1 to 24 (MTPQIKTHLLPKQEPSSSENHGSS) are disordered. Helical transmembrane passes span 28–48 (IVFNVSTSIIGAGIMSMPAAF), 53–73 (IVPAFLIITIIAWLSTISVGF), 100–120 (IAVQIATMVATFGCMIIFSII), 148–168 (WNTRIFALLFVYGFVLLPLVL), 181–201 (VSFLLAVLFVVISSVLAISAL), 219–239 (GSFWQLFTASPVIVTAFTFHF), 260–280 (ISVILCAAIYFATGLFGYLLF), 307–327 (IVRLSYVLHLMLVFPLLNFSL), 354–374 (LALLICCFLSAIAVPDIWYFF), 375–395 (QFMGSTITVSIAFIFPAAIVL), and 408–428 (IVAAIMLVLAVATSIIAISTN).

The protein belongs to the amino acid/polyamine transporter 2 family. Amino acid/auxin permease (AAAP) (TC 2.A.18.6) subfamily.

It is found in the membrane. This is Amino acid transporter AVT6C from Arabidopsis thaliana (Mouse-ear cress).